Here is a 219-residue protein sequence, read N- to C-terminus: Leucyl/phenylalanyl-tRNA--protein transferase (219 aa).

The protein belongs to the L/F-transferase family.

The protein localises to the cytoplasm. It catalyses the reaction N-terminal L-lysyl-[protein] + L-leucyl-tRNA(Leu) = N-terminal L-leucyl-L-lysyl-[protein] + tRNA(Leu) + H(+). It carries out the reaction N-terminal L-arginyl-[protein] + L-leucyl-tRNA(Leu) = N-terminal L-leucyl-L-arginyl-[protein] + tRNA(Leu) + H(+). The catalysed reaction is L-phenylalanyl-tRNA(Phe) + an N-terminal L-alpha-aminoacyl-[protein] = an N-terminal L-phenylalanyl-L-alpha-aminoacyl-[protein] + tRNA(Phe). Functions in the N-end rule pathway of protein degradation where it conjugates Leu, Phe and, less efficiently, Met from aminoacyl-tRNAs to the N-termini of proteins containing an N-terminal arginine or lysine. The sequence is that of Leucyl/phenylalanyl-tRNA--protein transferase from Leptospira interrogans serogroup Icterohaemorrhagiae serovar copenhageni (strain Fiocruz L1-130).